Consider the following 284-residue polypeptide: 2-dehydro-3-deoxyphosphooctonate aldolase (284 aa).

This sequence belongs to the KdsA family.

The protein localises to the cytoplasm. The enzyme catalyses D-arabinose 5-phosphate + phosphoenolpyruvate + H2O = 3-deoxy-alpha-D-manno-2-octulosonate-8-phosphate + phosphate. It participates in carbohydrate biosynthesis; 3-deoxy-D-manno-octulosonate biosynthesis; 3-deoxy-D-manno-octulosonate from D-ribulose 5-phosphate: step 2/3. The protein operates within bacterial outer membrane biogenesis; lipopolysaccharide biosynthesis. The protein is 2-dehydro-3-deoxyphosphooctonate aldolase of Mannheimia succiniciproducens (strain KCTC 0769BP / MBEL55E).